A 109-amino-acid polypeptide reads, in one-letter code: Nucleoid-associated protein ASA_2087 (109 aa).

2 disordered regions span residues 1 to 23 (MFGK…RMQK) and 87 to 109 (QSKS…KLPF). Positions 11-23 (MKQAQQMQERMQK) are enriched in low complexity.

This sequence belongs to the YbaB/EbfC family. As to quaternary structure, homodimer.

Its subcellular location is the cytoplasm. It localises to the nucleoid. Binds to DNA and alters its conformation. May be involved in regulation of gene expression, nucleoid organization and DNA protection. The protein is Nucleoid-associated protein ASA_2087 of Aeromonas salmonicida (strain A449).